A 122-amino-acid polypeptide reads, in one-letter code: UPF0102 protein Krad_1407 (122 aa).

This sequence belongs to the UPF0102 family.

The sequence is that of UPF0102 protein Krad_1407 from Kineococcus radiotolerans (strain ATCC BAA-149 / DSM 14245 / SRS30216).